We begin with the raw amino-acid sequence, 264 residues long: Probable pectate lyase D (264 aa).

The signal sequence occupies residues 1–17 (MFFKQLAVLSFATSALA). Residue asparagine 60 is glycosylated (N-linked (GlcNAc...) asparagine). The disordered stretch occupies residues 234–264 (YEGTDNNDEEPQEISTGPSNACQYTDPLPSC). Over residues 235 to 245 (EGTDNNDEEPQ) the composition is skewed to acidic residues. A compositionally biased stretch (polar residues) spans 246 to 256 (EISTGPSNACQ).

The protein belongs to the polysaccharide lyase 3 family. The cofactor is Ca(2+).

It is found in the secreted. The catalysed reaction is Eliminative cleavage of (1-&gt;4)-alpha-D-galacturonan to give oligosaccharides with 4-deoxy-alpha-D-galact-4-enuronosyl groups at their non-reducing ends.. Its function is as follows. Pectinolytic enzyme consist of four classes of enzymes: pectin lyase, polygalacturonase, pectin methylesterase and rhamnogalacturonase. Among pectinolytic enzymes, pectin lyase is the most important in depolymerization of pectin, since it cleaves internal glycosidic bonds of highly methylated pectins. Favors pectate, the anion, over pectin, the methyl ester. The sequence is that of Probable pectate lyase D (plyD) from Emericella nidulans (strain FGSC A4 / ATCC 38163 / CBS 112.46 / NRRL 194 / M139) (Aspergillus nidulans).